The following is a 557-amino-acid chain: Selenoprotein N (557 aa).

Over residues 1–21 the composition is skewed to basic and acidic residues; the sequence is MAADVDKTPAGEQKDDHEDRG. A disordered region spans residues 1 to 28; the sequence is MAADVDKTPAGEQKDDHEDRGTPSSRRG. Residues 35 to 55 form a helical membrane-spanning segment; it reads ISSLFIIAAIPVIGVCIKYYL. A non-standard amino acid (selenocysteine) is located at residue Sec430. N-linked (GlcNAc...) asparagine glycosylation is found at Asn451 and Asn499.

As to quaternary structure, interacts with ryr3.

The protein resides in the endoplasmic reticulum membrane. Its function is as follows. Plays an important role in cell protection against oxidative stress and in the regulation of redox-related calcium homeostasis. Regulates the calcium level of the ER by protecting the calcium pump ATP2A2 against the oxidoreductase ERO1A-mediated oxidative damage. Acts as a modulator of ryanodine receptor (RyR) activity: protects RyR from oxidation due to increased oxidative stress, or directly controls the RyR redox state, regulating the RyR-mediated calcium mobilization required for normal muscle development and differentiation. Plays an important role in muscle development and differentiation during early development. Required for development of the slow muscle fiber lineage. Required for the correct organization and attachment of the myofibrils, as well as for the continuity and integrity of the connective tissue that forms the myoseptum. The chain is Selenoprotein N from Danio rerio (Zebrafish).